The primary structure comprises 456 residues: Methylenetetrahydrofolate--tRNA-(uracil-5-)-methyltransferase TrmFO (456 aa).

An FAD-binding site is contributed by 9–14 (GGGMAG).

It belongs to the MnmG family. TrmFO subfamily. FAD is required as a cofactor.

It localises to the cytoplasm. The catalysed reaction is uridine(54) in tRNA + (6R)-5,10-methylene-5,6,7,8-tetrahydrofolate + NADH + H(+) = 5-methyluridine(54) in tRNA + (6S)-5,6,7,8-tetrahydrofolate + NAD(+). It carries out the reaction uridine(54) in tRNA + (6R)-5,10-methylene-5,6,7,8-tetrahydrofolate + NADPH + H(+) = 5-methyluridine(54) in tRNA + (6S)-5,6,7,8-tetrahydrofolate + NADP(+). Functionally, catalyzes the folate-dependent formation of 5-methyl-uridine at position 54 (M-5-U54) in all tRNAs. This Novosphingobium aromaticivorans (strain ATCC 700278 / DSM 12444 / CCUG 56034 / CIP 105152 / NBRC 16084 / F199) protein is Methylenetetrahydrofolate--tRNA-(uracil-5-)-methyltransferase TrmFO.